A 108-amino-acid chain; its full sequence is Thiosulfate sulfurtransferase GlpE (108 aa).

The Rhodanese domain maps to 17-105 (QEKEAVLVDI…WQRQFPAEVA (89 aa)). Cysteine 65 (cysteine persulfide intermediate) is an active-site residue.

It belongs to the GlpE family.

It is found in the cytoplasm. The enzyme catalyses thiosulfate + hydrogen cyanide = thiocyanate + sulfite + 2 H(+). The catalysed reaction is thiosulfate + [thioredoxin]-dithiol = [thioredoxin]-disulfide + hydrogen sulfide + sulfite + 2 H(+). Functionally, transferase that catalyzes the transfer of sulfur from thiosulfate to thiophilic acceptors such as cyanide or dithiols. May function in a CysM-independent thiosulfate assimilation pathway by catalyzing the conversion of thiosulfate to sulfite, which can then be used for L-cysteine biosynthesis. The polypeptide is Thiosulfate sulfurtransferase GlpE (Escherichia coli O127:H6 (strain E2348/69 / EPEC)).